The sequence spans 402 residues: Probable 2,3-bisphosphoglycerate-independent phosphoglycerate mutase (402 aa).

It belongs to the BPG-independent phosphoglycerate mutase family. A-PGAM subfamily.

It carries out the reaction (2R)-2-phosphoglycerate = (2R)-3-phosphoglycerate. The protein operates within carbohydrate degradation; glycolysis; pyruvate from D-glyceraldehyde 3-phosphate: step 3/5. Functionally, catalyzes the interconversion of 2-phosphoglycerate and 3-phosphoglycerate. The protein is Probable 2,3-bisphosphoglycerate-independent phosphoglycerate mutase of Thermosipho africanus (strain TCF52B).